The sequence spans 237 residues: Lycopene beta-cyclase (237 aa).

A run of 7 helical transmembrane segments spans residues 3 to 23 (TSYL…LGVV), 38 to 58 (VGIL…YLIA), 80 to 100 (EYLF…ALPL), 113 to 133 (AVLG…LLTV), 137 to 157 (FYIG…WAVG), 170 to 192 (AAVL…DGIW), and 213 to 233 (AFFF…AWVL).

Belongs to the lycopene beta-cyclase family.

The protein resides in the cell membrane. The catalysed reaction is a carotenoid psi-end group = a carotenoid beta-end derivative. It carries out the reaction all-trans-lycopene = gamma-carotene. It catalyses the reaction gamma-carotene = all-trans-beta-carotene. It functions in the pathway carotenoid biosynthesis; beta-carotene biosynthesis. Its function is as follows. Catalyzes the cyclization of both ends of lycopene to form beta-carotene, a retinal precursor. Is required for bacteriorhodopsin biogenesis, a light-driven proton pump with a covalently bound retinal cofactor. This is Lycopene beta-cyclase from Halobacterium salinarum (strain ATCC 29341 / DSM 671 / R1).